We begin with the raw amino-acid sequence, 287 residues long: GDT1-like protein C17G8.08c (287 aa).

Transmembrane regions (helical) follow at residues Trp-7–Met-27, Leu-50–Ala-70, Ala-89–Pro-109, Leu-112–Ala-132, Val-194–Glu-214, Val-232–Ile-252, and Met-267–Phe-287.

The protein belongs to the GDT1 family.

The protein localises to the membrane. The chain is GDT1-like protein C17G8.08c from Schizosaccharomyces pombe (strain 972 / ATCC 24843) (Fission yeast).